Here is a 1173-residue protein sequence, read N- to C-terminus: Fas-binding factor 1 (1173 aa).

The disordered stretch occupies residues 17–168 (MALRTKKGLK…PSSSKTGLQY (152 aa)). Basic and acidic residues predominate over residues 46–56 (KPAEPASHAKD). Over residues 80 to 93 (AGADAEASSVSDAD) the composition is skewed to low complexity. A Phosphoserine modification is found at Ser172. Disordered regions lie at residues 180-225 (LAGL…GDTP) and 241-566 (TTLG…SSRE). Low complexity predominate over residues 206–216 (SPGAAAGQGPS). Composition is skewed to basic and acidic residues over residues 247–258 (DSPKAERKKTGD) and 287–299 (TGER…DKKY). Polar residues-rich tracts occupy residues 331–345 (VASS…QSVS), 396–411 (SPVQ…MTPS), 468–477 (VISQKKSQNL), and 533–544 (TGSSMSWSQATT). Coiled coils occupy residues 617–742 (TAQL…QQAS), 808–917 (QQRE…MNKC), and 975–1057 (CELR…VQRQ). Lys1002 participates in a covalent cross-link: Glycyl lysine isopeptide (Lys-Gly) (interchain with G-Cter in SUMO2). The interval 1091 to 1124 (ASLPGLPPRVQGPAASSRDAVQAPASSSPQCSQP) is disordered. Residues 1110–1124 (AVQAPASSSPQCSQP) are compositionally biased toward low complexity.

As to quaternary structure, interacts with PARD3. May interact with FAS cytoplasmic domain. Interacts with TRAPPC14. As to expression, broadly expressed.

The protein resides in the cytoplasm. It localises to the cytoskeleton. Its subcellular location is the microtubule organizing center. The protein localises to the centrosome. It is found in the centriole. The protein resides in the spindle pole. It localises to the cell junction. In terms of biological role, keratin-binding protein required for epithelial cell polarization. Involved in apical junction complex (AJC) assembly via its interaction with PARD3. Required for ciliogenesis. This is Fas-binding factor 1 (Fbf1) from Mus musculus (Mouse).